Here is a 291-residue protein sequence, read N- to C-terminus: ATP synthase gamma chain (291 aa).

It belongs to the ATPase gamma chain family. F-type ATPases have 2 components, CF(1) - the catalytic core - and CF(0) - the membrane proton channel. CF(1) has five subunits: alpha(3), beta(3), gamma(1), delta(1), epsilon(1). CF(0) has three main subunits: a, b and c.

Its subcellular location is the cell inner membrane. In terms of biological role, produces ATP from ADP in the presence of a proton gradient across the membrane. The gamma chain is believed to be important in regulating ATPase activity and the flow of protons through the CF(0) complex. This chain is ATP synthase gamma chain, found in Ruegeria pomeroyi (strain ATCC 700808 / DSM 15171 / DSS-3) (Silicibacter pomeroyi).